The primary structure comprises 611 residues: Chaperone protein DnaK (611 aa).

Thr173 is modified (phosphothreonine; by autocatalysis). The span at 577-591 (AAAAQAAQGGEADAG) shows a compositional bias: low complexity. Residues 577 to 611 (AAAAQAAQGGEADAGAGKKDDGVVDADFEEVKDDK) form a disordered region. Residues 599 to 611 (VVDADFEEVKDDK) show a composition bias toward acidic residues.

This sequence belongs to the heat shock protein 70 family.

Functionally, acts as a chaperone. This Lysinibacillus sphaericus (strain C3-41) protein is Chaperone protein DnaK.